A 419-amino-acid polypeptide reads, in one-letter code: uncharacterized protein (419 aa).

The next 7 helical transmembrane spans lie at 16–36, 186–206, 235–255, 283–303, 318–338, 340–360, and 369–389; these read IMAK…LVVT, LVYI…SMIA, LLGI…AGSL, VIYA…LAAF, ITPM…GLNA, DAGF…IMFL, and FWQA…LAVI.

To M.jannaschii MJ1024.

The protein localises to the cell membrane. This is an uncharacterized protein from Bacillus subtilis (strain 168).